Here is a 469-residue protein sequence, read N- to C-terminus: Argininosuccinate lyase (469 aa).

The protein belongs to the lyase 1 family. Argininosuccinate lyase subfamily.

The protein resides in the cytoplasm. It carries out the reaction 2-(N(omega)-L-arginino)succinate = fumarate + L-arginine. The protein operates within amino-acid biosynthesis; L-arginine biosynthesis; L-arginine from L-ornithine and carbamoyl phosphate: step 3/3. This chain is Argininosuccinate lyase, found in Burkholderia mallei (strain NCTC 10247).